Here is a 124-residue protein sequence, read N- to C-terminus: WAP four-disulfide core domain protein 2 (124 aa).

Positions 1 to 27 are cleaved as a signal peptide; that stretch reads MPACRPGPLAGALLLGLLLLGLPRVPG. 2 consecutive WAP domains span residues 29 to 73 and 74 to 123; these read EVEK…CHLP and NEKE…VTPI. Cystine bridges form between Cys36-Cys62, Cys45-Cys66, Cys49-Cys61, Cys55-Cys70, Cys80-Cys110, Cys93-Cys114, Cys97-Cys109, and Cys103-Cys119. Residue Asn44 is glycosylated (N-linked (GlcNAc...) asparagine).

In terms of assembly, homotrimer; disulfide-linked. In terms of tissue distribution, epididymis. Highest levels are found in the caput and proximal cauda regions. Lower levels in the distal cauda. Not detected in the efferent ducts.

The protein localises to the secreted. Broad range protease inhibitor. Possible function in sperm maturation. In Canis lupus familiaris (Dog), this protein is WAP four-disulfide core domain protein 2 (WFDC2).